We begin with the raw amino-acid sequence, 352 residues long: Phenylalanine--tRNA ligase alpha subunit (352 aa).

Glu-258 contributes to the Mg(2+) binding site.

Belongs to the class-II aminoacyl-tRNA synthetase family. Phe-tRNA synthetase alpha subunit type 1 subfamily. Tetramer of two alpha and two beta subunits. Mg(2+) serves as cofactor.

It localises to the cytoplasm. The enzyme catalyses tRNA(Phe) + L-phenylalanine + ATP = L-phenylalanyl-tRNA(Phe) + AMP + diphosphate + H(+). The protein is Phenylalanine--tRNA ligase alpha subunit of Staphylococcus aureus (strain NCTC 8325 / PS 47).